The following is a 732-amino-acid chain: Elongation factor 2 (732 aa).

The tr-type G domain occupies 19-228; sequence ELIRNIGIVA…TKITFKDIVE (210 aa). GTP is bound by residues 28–35, 94–98, and 148–151; these read AHIDHGKT, DTPGH, and NKID. A Diphthamide modification is found at His598.

This sequence belongs to the TRAFAC class translation factor GTPase superfamily. Classic translation factor GTPase family. EF-G/EF-2 subfamily.

Its subcellular location is the cytoplasm. Its function is as follows. Catalyzes the GTP-dependent ribosomal translocation step during translation elongation. During this step, the ribosome changes from the pre-translocational (PRE) to the post-translocational (POST) state as the newly formed A-site-bound peptidyl-tRNA and P-site-bound deacylated tRNA move to the P and E sites, respectively. Catalyzes the coordinated movement of the two tRNA molecules, the mRNA and conformational changes in the ribosome. The protein is Elongation factor 2 (fusA) of Thermoplasma acidophilum (strain ATCC 25905 / DSM 1728 / JCM 9062 / NBRC 15155 / AMRC-C165).